Reading from the N-terminus, the 452-residue chain is Trigger factor (452 aa).

A PPIase FKBP-type domain is found at 162–247 (GDTVTIDYKG…IHEVKSKQLP (86 aa)). Residues 427 to 452 (AKAKLEAKEAEEAEDKEEAEDKKENK) form a disordered region.

The protein belongs to the FKBP-type PPIase family. Tig subfamily.

It is found in the cytoplasm. The catalysed reaction is [protein]-peptidylproline (omega=180) = [protein]-peptidylproline (omega=0). In terms of biological role, involved in protein export. Acts as a chaperone by maintaining the newly synthesized protein in an open conformation. Functions as a peptidyl-prolyl cis-trans isomerase. This Lactobacillus helveticus (strain DPC 4571) protein is Trigger factor.